Here is a 427-residue protein sequence, read N- to C-terminus: Enolase (427 aa).

Q163 is a (2R)-2-phosphoglycerate binding site. E205 (proton donor) is an active-site residue. The Mg(2+) site is built by D242, E285, and D312. (2R)-2-phosphoglycerate is bound by residues K337, R366, S367, and K388. K337 functions as the Proton acceptor in the catalytic mechanism.

This sequence belongs to the enolase family. Mg(2+) is required as a cofactor.

It is found in the cytoplasm. The protein resides in the secreted. The protein localises to the cell surface. The enzyme catalyses (2R)-2-phosphoglycerate = phosphoenolpyruvate + H2O. Its pathway is carbohydrate degradation; glycolysis; pyruvate from D-glyceraldehyde 3-phosphate: step 4/5. Catalyzes the reversible conversion of 2-phosphoglycerate (2-PG) into phosphoenolpyruvate (PEP). It is essential for the degradation of carbohydrates via glycolysis. The chain is Enolase from Polaromonas sp. (strain JS666 / ATCC BAA-500).